Consider the following 883-residue polypeptide: QMSYVDHSKSSGPPQPGPMGPMGPRGPPGPPGSSGPQGFTGPPGEPGEPGASGAMGSRGPSGPPGKNGDDGEPGKGAAGPQGARGFSGLDGAKGDAGPAGPKGESGAPGENGVPGVMGARGRPGPPGPSGARGNDGNTGPXGPPGPTGGETGPAGGRGNEGPQGARGEPGNPGPAGPAGPAGSPGTDGGPGAKGSPGAAGLAGAPGFPGGPAGAQGAVGAPGPKGNSGDPGASGPKGEPGAKGEPGPAGVQGLPGPSGEEGKRGARGEPGGAGPRGPPGERGFPGADGGAGGKGAPGERGAPGSLGAQGATGESGSPGAPGAPGSKGVTGSPGSPGPDGKTGPAGVAGQDGRPGPPGSAGARGQPGVMGFPGPKGPAGESGKPGERDGDVGAPGPSGVAGPAGEKGDRGFPGERGAPGLGGPTGARGAPGPAGNDGAKGEPGAAGAPGGLGAPGMQGMPGERGASGLPGAKGERGDAGGKGGDGAPGKDGSRGMTGALGVPGPPGAQGEKVAGPTGPRGETGPPGPAGFAGPPGADGQPGAKGETGDSGPKGDAGPQGPAGPTGPKGGAGPPGATGFPGPAGRVGPPGPAGAAGPPGPVGPVGKGETGXAGRPGPQGLAGQRGLVGLPGQRGERGFSGLPGPSGEPGKQGASGPVGERGPPGPSGPPGLSGATGEAGREGSQGHDGAPGRDGSAGPKGDRGESGMAGPPGPPGAPGAPGAVGPSGKSGDRGETGPAGPAGPSGPAGVRGPAGPAGAKGDRGEAGEAGDRGHKGFTGMQGLPGPAGVHGERGPAGASGPAGPRGPAGSNGAPGKDNGEMGPAGPPGPPGPAGPPGPPGSGFDFVSQPLQEKAPDPFRGGHYLRSPDGTQKKALLLGGSNDVELR.

The interval 1–883 (QMSYVDHSKS…LGGSNDVELR (883 aa)) is disordered. Pro residues predominate over residues 13–33 (PPQPGPMGPMGPRGPPGPPGS). 3 stretches are compositionally biased toward low complexity: residues 34-57 (SGPQ…AMGS), 113-122 (VPGVMGARGR), and 129-140 (SGARGNDGNTGP). 2 stretches are compositionally biased toward gly residues: residues 147-161 (TGGE…GNEG) and 185-194 (GTDGGPGAKG). 3 stretches are compositionally biased toward low complexity: residues 195–205 (SPGAAGLAGAP), 214–223 (AQGAVGAPGP), and 230–248 (PGAS…PGPA). The segment covering 285-297 (GADGGAGGKGAPG) has biased composition (gly residues). Composition is skewed to low complexity over residues 310–326 (ATGE…PGSK) and 390–402 (VGAP…AGPA). Residues 415-424 (GAPGLGGPTG) are compositionally biased toward gly residues. Positions 425–444 (ARGAPGPAGNDGAKGEPGAA) are enriched in low complexity. Gly residues-rich tracts occupy residues 445 to 454 (GAPGGLGAPG) and 478 to 487 (GGKGGDGAPG). Residues 512–542 (AGPTGPRGETGPPGPAGFAGPPGADGQPGAK) show a composition bias toward low complexity. The span at 564 to 573 (GPKGGAGPPG) shows a compositional bias: gly residues. Low complexity-rich tracts occupy residues 574–584 (ATGFPGPAGRV), 717–726 (APGAVGPSGK), and 742–756 (SGPA…PAGA). The segment covering 757-771 (KGDRGEAGEAGDRGH) has biased composition (basic and acidic residues). Residues 792 to 812 (PAGASGPAGPRGPAGSNGAPG) are compositionally biased toward low complexity. Residues 821 to 836 (AGPPGPPGPAGPPGPP) show a composition bias toward pro residues.

This sequence belongs to the fibrillar collagen family.

The sequence is that of Collagen, type I, alpha 1b from Epinephelus costae (Goldblotch grouper).